Reading from the N-terminus, the 145-residue chain is D-aminoacyl-tRNA deacylase (145 aa).

The short motif at 137 to 138 is the Gly-cisPro motif, important for rejection of L-amino acids element; it reads GP.

This sequence belongs to the DTD family. In terms of assembly, homodimer.

The protein resides in the cytoplasm. It carries out the reaction glycyl-tRNA(Ala) + H2O = tRNA(Ala) + glycine + H(+). The enzyme catalyses a D-aminoacyl-tRNA + H2O = a tRNA + a D-alpha-amino acid + H(+). In terms of biological role, an aminoacyl-tRNA editing enzyme that deacylates mischarged D-aminoacyl-tRNAs. Also deacylates mischarged glycyl-tRNA(Ala), protecting cells against glycine mischarging by AlaRS. Acts via tRNA-based rather than protein-based catalysis; rejects L-amino acids rather than detecting D-amino acids in the active site. By recycling D-aminoacyl-tRNA to D-amino acids and free tRNA molecules, this enzyme counteracts the toxicity associated with the formation of D-aminoacyl-tRNA entities in vivo and helps enforce protein L-homochirality. The polypeptide is D-aminoacyl-tRNA deacylase (Cereibacter sphaeroides (strain ATCC 17029 / ATH 2.4.9) (Rhodobacter sphaeroides)).